The chain runs to 555 residues: Formate--tetrahydrofolate ligase (555 aa).

65–72 (TPAGEGKS) is a binding site for ATP.

It belongs to the formate--tetrahydrofolate ligase family.

The catalysed reaction is (6S)-5,6,7,8-tetrahydrofolate + formate + ATP = (6R)-10-formyltetrahydrofolate + ADP + phosphate. It participates in one-carbon metabolism; tetrahydrofolate interconversion. This Staphylococcus carnosus (strain TM300) protein is Formate--tetrahydrofolate ligase.